The sequence spans 555 residues: TBCC domain-containing protein 1 (555 aa).

The C-CAP/cofactor C-like domain maps to 302–433 (PEVSPMVIMS…LEDHMAQVGL (132 aa)).

This sequence belongs to the TBCC family.

The protein localises to the cytoplasm. It localises to the cytoskeleton. The protein resides in the microtubule organizing center. Its subcellular location is the centrosome. It is found in the spindle pole. Functionally, may play a role in the regulation of centrosome and Golgi apparatus positioning. In Gallus gallus (Chicken), this protein is TBCC domain-containing protein 1 (TBCCD1).